We begin with the raw amino-acid sequence, 226 residues long: Protein GrpE (226 aa).

2 disordered regions span residues 1–31 (MTPN…PDTL) and 189–226 (VSKG…PAEA). Over residues 192–218 (GGPKAAEASKPAGEAPKPAGEAPKPAG) the composition is skewed to low complexity.

Belongs to the GrpE family. In terms of assembly, homodimer.

It is found in the cytoplasm. Participates actively in the response to hyperosmotic and heat shock by preventing the aggregation of stress-denatured proteins, in association with DnaK and GrpE. It is the nucleotide exchange factor for DnaK and may function as a thermosensor. Unfolded proteins bind initially to DnaJ; upon interaction with the DnaJ-bound protein, DnaK hydrolyzes its bound ATP, resulting in the formation of a stable complex. GrpE releases ADP from DnaK; ATP binding to DnaK triggers the release of the substrate protein, thus completing the reaction cycle. Several rounds of ATP-dependent interactions between DnaJ, DnaK and GrpE are required for fully efficient folding. The polypeptide is Protein GrpE (Methylobacterium nodulans (strain LMG 21967 / CNCM I-2342 / ORS 2060)).